We begin with the raw amino-acid sequence, 340 residues long: Speriolin-like protein (340 aa).

Disordered stretches follow at residues 42 to 73 (GGGH…RFTS) and 94 to 135 (APLS…KLSP). A Phosphoserine modification is found at serine 60. Residues 123–133 (PHSHRGTDRKL) are compositionally biased toward basic and acidic residues. A Phosphoserine modification is found at serine 134.

The protein belongs to the speriolin family.

The protein localises to the cytoplasm. This chain is Speriolin-like protein (SPATC1L), found in Homo sapiens (Human).